Consider the following 222-residue polypeptide: Pleckstrin homology domain-containing family B member 2 (222 aa).

Residues 2–109 (AFVKSGWLLR…WKFTLQDSRT (108 aa)) enclose the PH domain. K20 serves as a coordination point for a 1,2-diacyl-sn-glycero-3-phospho-L-serine.

Its subcellular location is the recycling endosome membrane. Its function is as follows. Involved in retrograde transport of recycling endosomes. This is Pleckstrin homology domain-containing family B member 2 (PLEKHB2) from Pongo abelii (Sumatran orangutan).